A 577-amino-acid polypeptide reads, in one-letter code: MPCIQAQHGSLSQCAGPCDNYVPDILNSEFGKFTMDLVNSEIAASTSLPSFSTFMDGYTGEFDAFLYQIPSSNQQSSLKVEEFQVFGCYPGSFTNQLDETMSSSGSDYYGSPCSIPSPSTPGFQNPQLPTWECSYGAYSPTQNYDNMRHWTEQQKNSISQQTFFSFGTPAHSPNMAANPLKIAPATHRLDQQLVDTDVFALAQNSSAGFPAVPLGQAPGVLDSSVLLDSPLSPSKTRSPSSNEGRCAVCGDNASCQHYGVRTCEGCKGFFKRTVQKNAKYICLANKDCPVDKRRRNRCQFCRFQKCLVVGMVKEVVRTDSLKGRRGRLPSKPKQIAESSPVDLINSLVRAHIDSIPSSSKLDYSKFQETVPLQLEKESSVDVQQFYDLLSGSLEVIRKWAEKIQGFVDLPKEDQDLLLESAFLELFILRLAYRSRPEEGKLIFCNGVVLHRTQCVRGFGEWIDSIIEFSHSLQRMNIDVPSFSCLSALVIVTDRHGLKEPKKVEELQSQIINCLKEHIPSSMNEQNRPNCLSKLLGKLPELRTLCTQGLQRIFYLKLEDLVPPPPIVDKIFMDTLPF.

Residues Glu243–Thr318 constitute a DNA-binding region (nuclear receptor). NR C4-type zinc fingers lie at residues Cys246–Cys266 and Cys282–Met311. The tract at residues Ala247–Lys333 is required for binding NBRE-containing DNA. The 236-residue stretch at Ser339 to Thr574 folds into the NR LBD domain. The interval Pro500 to Asn523 is may bind lipopolysaccharide. Residues Pro563–Thr574 form an AF-2 region.

This sequence belongs to the nuclear hormone receptor family. NR4 subfamily. The cofactor is Zn(2+).

Its subcellular location is the nucleus. The protein localises to the cytoplasm. The protein resides in the cytosol. Its function is as follows. Orphan nuclear receptor. Binds the NGFI-B response element (NBRE) 5'-AAAAGGTCA-3'. In the cytosol, may detect bacterial lipopolysaccharide (LPS) and NBRE-containing mitochondrial DNA released during pyroptosis, and play a role in non-canonical inflammasome activation. The sequence is that of Nuclear receptor subfamily 4 group A member 1 (nr4a1) from Xenopus laevis (African clawed frog).